A 253-amino-acid chain; its full sequence is Demethylmenaquinone methyltransferase (253 aa).

S-adenosyl-L-methionine contacts are provided by residues Thr75, Asp96, and 124–125 (DA).

The protein belongs to the class I-like SAM-binding methyltransferase superfamily. MenG/UbiE family.

It carries out the reaction a 2-demethylmenaquinol + S-adenosyl-L-methionine = a menaquinol + S-adenosyl-L-homocysteine + H(+). The protein operates within quinol/quinone metabolism; menaquinone biosynthesis; menaquinol from 1,4-dihydroxy-2-naphthoate: step 2/2. Its function is as follows. Methyltransferase required for the conversion of demethylmenaquinol (DMKH2) to menaquinol (MKH2). This chain is Demethylmenaquinone methyltransferase, found in Desulfitobacterium hafniense (strain Y51).